We begin with the raw amino-acid sequence, 616 residues long: Chaperone protein HscA (616 aa).

It belongs to the heat shock protein 70 family.

Chaperone involved in the maturation of iron-sulfur cluster-containing proteins. Has a low intrinsic ATPase activity which is markedly stimulated by HscB. Involved in the maturation of IscU. In Salmonella heidelberg (strain SL476), this protein is Chaperone protein HscA.